Here is a 243-residue protein sequence, read N- to C-terminus: MGKRPLVRRRGRGGMQFRAATTGKIARAKYPAFELGEQREGTVIDLVHERGRDAPLAKIRFEDGIVSYVPAVLGTRVGSSMNFGLKSEIRDGNVISVQNIPDGTTVCNVEKHYGDGGAIVKSAGGNATVFSHGEGGVVLKLPSGRFSTLNPKNRAMVGTLAGGGVSERPFMSAGGKWRRFRSKGRKYPIVRGVAQAAYVHPHGGGRHQHVGQSSTVSRNAPPGAKVGSIAARKTGRAKIKDRR.

A disordered region spans residues 202–243; it reads HGGGRHQHVGQSSTVSRNAPPGAKVGSIAARKTGRAKIKDRR. Positions 233 to 243 are enriched in basic residues; the sequence is KTGRAKIKDRR.

This sequence belongs to the universal ribosomal protein uL2 family. Part of the 50S ribosomal subunit. Forms a bridge to the 30S subunit in the 70S ribosome.

One of the primary rRNA binding proteins. Required for association of the 30S and 50S subunits to form the 70S ribosome, for tRNA binding and peptide bond formation. It has been suggested to have peptidyltransferase activity; this is somewhat controversial. Makes several contacts with the 16S rRNA in the 70S ribosome. The chain is Large ribosomal subunit protein uL2 from Cenarchaeum symbiosum (strain A).